The sequence spans 424 residues: Piriformospora indica-insensitive protein 2 (424 aa).

The signal sequence occupies residues 1–21; the sequence is MLWQTFFSSLLLLSLLFGCNG. LRR repeat units follow at residues 141 to 166, 167 to 190, 191 to 213, 214 to 237, 238 to 263, 265 to 286, 287 to 311, 312 to 336, 337 to 360, and 362 to 387; these read ASNL…IGNL, TKLK…ICNL, KRLK…CFKG, LKEL…SFGD, LVSL…GFLK, LTLL…IENI, QSLT…NWGK, MSNL…LTNL, KRLR…KLEA, and PCLG…FYEK.

It localises to the cell membrane. Functionally, required for growth promotion and enhanced seed production mediated by the endophytic fungus Piriformospora indica. The chain is Piriformospora indica-insensitive protein 2 (PII-2) from Arabidopsis thaliana (Mouse-ear cress).